The primary structure comprises 344 residues: MKYLVLALDAMGGDFGPKVTVPASLEALSLHPKLKLLLVGDPDVIKPILDGFNVKYLRRLTLIPSKSVVNDNDRPAQAIRLSKNTSMRIALELIKSGHAQACVSAGNTGALMGLSKLVIKLINGIDRPALTALLPHQKQGKTVILDLGANILCNDSMLVQFAIMGSVLSEQIAGIVNPRVALLNIGSEETKGLDNIRCASKILHTIPSIHYIGYIEANDLLMGKTDVLVCDGFAGNITLKTMEGMMRLILSLLTTSEEKNKLYYFIRKIKMWMNKCVFKQFVQLNPDLYNGAYLVGLRSTVIKSHGGANKHAFTKAITQAMYAVERRIPEKIADRLNTMMLYKK.

The protein belongs to the PlsX family. Homodimer. Probably interacts with PlsY.

It localises to the cytoplasm. The enzyme catalyses a fatty acyl-[ACP] + phosphate = an acyl phosphate + holo-[ACP]. Its pathway is lipid metabolism; phospholipid metabolism. Catalyzes the reversible formation of acyl-phosphate (acyl-PO(4)) from acyl-[acyl-carrier-protein] (acyl-ACP). This enzyme utilizes acyl-ACP as fatty acyl donor, but not acyl-CoA. The polypeptide is Phosphate acyltransferase (Blochmanniella floridana).